A 100-amino-acid polypeptide reads, in one-letter code: UPF0473 protein Csac_1599 (100 aa).

Belongs to the UPF0473 family.

The chain is UPF0473 protein Csac_1599 from Caldicellulosiruptor saccharolyticus (strain ATCC 43494 / DSM 8903 / Tp8T 6331).